The chain runs to 1295 residues: Protein FORGETTER 1 (1295 aa).

3 stretches are compositionally biased toward pro residues: residues 1 to 14 (MTQS…PLPA), 75 to 89 (PQQP…PPPI), and 162 to 177 (PPTP…PPPE). 4 disordered regions span residues 1–20 (MTQS…HSAA), 68–107 (RPQF…PAHG), 153–204 (LTAS…MDYR), and 626–688 (PEQP…NDSD). Acidic residues predominate over residues 178–193 (EVNEEAIEVEREEDEG). A Nuclear localization signal motif is present at residues 643–650 (RKRHSASP). Residues 669–688 (DNESDLESEADSADDSNDSD) are compositionally biased toward acidic residues. The segment at 691 to 741 (FQICQICSGEDERKKLLHCSECDKLFHPDCVVPPVIDLPSEAWICFSCKEK) adopts a PHD-type zinc-finger fold.

Belongs to the SBNO family. As to quaternary structure, interacts with SWI/SNF and ISWI chromatin remodelers such as BRM, CHR11 and CHR17. Binds to histone H3.

The protein resides in the nucleus. Its function is as follows. Required for normal embryo development. Necessary to acquire heat stress (HS) memory, by modulating nucleosome occupancy and regulating heat-induced gene expression. Associates globally with the nucleosome-poor regions flanking the transcription units of expressed genes. Binds to the promoter regions, primarily to the proximal promoter just upstream of the transcriptional start sites (TSS) and somewhat more weakly to the region downstream of the transcription termination site (TTS), of actively expressed genes (e.g. HSA32, HSP18.2 and HSP22.0) in a heat-dependent fashion. The chain is Protein FORGETTER 1 from Arabidopsis thaliana (Mouse-ear cress).